The sequence spans 61 residues: MARKALIVKQQKPQKYKTREYNRCKICGRPHAYLRKFGMCRICFRKYAHQGMIPGVKKASW.

Zn(2+) contacts are provided by Cys24, Cys27, Cys40, and Cys43.

It belongs to the universal ribosomal protein uS14 family. Zinc-binding uS14 subfamily. Part of the 30S ribosomal subunit. Contacts proteins S3 and S10. It depends on Zn(2+) as a cofactor.

Binds 16S rRNA, required for the assembly of 30S particles and may also be responsible for determining the conformation of the 16S rRNA at the A site. This is Small ribosomal subunit protein uS14 from Thermoanaerobacter sp. (strain X514).